Consider the following 591-residue polypeptide: PE-PGRS family protein PE_PGRS5 (591 aa).

In terms of domain architecture, PE spans 1–93 (MSFVIAQPEM…AGAYASAEAA (93 aa)). The segment at 94–591 (NAGPNMLAAV…GGKGNNGNPG (498 aa)) is PGRS. Gly residues-rich tracts occupy residues 303 to 324 (GAGG…GNGG), 336 to 363 (ASGG…GHVS), 371 to 412 (GAGG…GDGG), 477 to 491 (SEAG…GGDG), 539 to 567 (AGTG…GVNG), and 579 to 591 (GATG…GNPG). 3 disordered regions span residues 303–412 (GAGG…GDGG), 468–491 (GSVN…GGDG), and 539–591 (AGTG…GNPG).

The protein belongs to the mycobacterial PE family. PGRS subfamily. As to quaternary structure, interacts with human TLR4.

The protein localises to the host endoplasmic reticulum. Functionally, involved in endoplasmic reticulum (ER) stress-mediated apoptosis through human Toll-like receptor 4 (TLR4) signaling pathway. Localizes to the host ER, leading to ER stress, disruption of intracellular Ca(2+) homeostasis and increase of nitric oxide (NO) and reactive oxygen species (ROS) levels. Stress response results in caspase-8 activation and apoptosis of macrophage cells. Apoptosis may lead to dissemination of the bacteria, thereby spreading the disease. The polypeptide is PE-PGRS family protein PE_PGRS5 (Mycobacterium tuberculosis (strain ATCC 25618 / H37Rv)).